A 136-amino-acid polypeptide reads, in one-letter code: Holo-[acyl-carrier-protein] synthase (136 aa).

Asp8 and Glu57 together coordinate Mg(2+).

The protein belongs to the P-Pant transferase superfamily. AcpS family. Requires Mg(2+) as cofactor.

It localises to the cytoplasm. It carries out the reaction apo-[ACP] + CoA = holo-[ACP] + adenosine 3',5'-bisphosphate + H(+). Its function is as follows. Transfers the 4'-phosphopantetheine moiety from coenzyme A to a Ser of acyl-carrier-protein. The protein is Holo-[acyl-carrier-protein] synthase of Methylorubrum populi (strain ATCC BAA-705 / NCIMB 13946 / BJ001) (Methylobacterium populi).